The sequence spans 424 residues: L-glutamine:2-deoxy-scyllo-inosose aminotransferase (424 aa).

At K202 the chain carries N6-(pyridoxal phosphate)lysine.

The protein belongs to the DegT/DnrJ/EryC1 family. L-glutamine:2-deoxy-scyllo-inosose/scyllo-inosose aminotransferase subfamily. Requires pyridoxal 5'-phosphate as cofactor.

The catalysed reaction is 2-deoxy-L-scyllo-inosose + L-glutamine = 2-deoxy-scyllo-inosamine + 2-oxoglutaramate. It carries out the reaction 3-amino-2,3-dideoxy-scyllo-inosose + L-glutamine = 2-deoxystreptamine + 2-oxoglutaramate. The protein operates within metabolic intermediate biosynthesis; 2-deoxystreptamine biosynthesis; 2-deoxystreptamine from D-glucose 6-phosphate: step 2/4. Its pathway is metabolic intermediate biosynthesis; 2-deoxystreptamine biosynthesis; 2-deoxystreptamine from D-glucose 6-phosphate: step 4/4. It participates in antibiotic biosynthesis; neomycin biosynthesis. Catalyzes the PLP-dependent transamination of 2-deoxy-scyllo-inosose (2-DOI) to form 2-deoxy-scyllo-inosamine (2-DOIA) using L-glutamine as the amino donor. Also catalyzes the transamination of 3-amino-2,3-dideoxy-scyllo-inosose (keto-2-DOIA) into 2-deoxystreptamine (2-DOS). In Streptomyces fradiae (Streptomyces roseoflavus), this protein is L-glutamine:2-deoxy-scyllo-inosose aminotransferase (neoB).